The primary structure comprises 146 residues: Large ribosomal subunit protein uL15 (146 aa).

Positions methionine 1–arginine 18 are enriched in basic and acidic residues. Residues methionine 1–glutamine 54 are disordered. Residues serine 42 to glycine 52 show a composition bias toward gly residues.

Belongs to the universal ribosomal protein uL15 family. In terms of assembly, part of the 50S ribosomal subunit.

Its function is as follows. Binds to the 23S rRNA. The sequence is that of Large ribosomal subunit protein uL15 from Staphylococcus aureus (strain Mu3 / ATCC 700698).